Here is a 361-residue protein sequence, read N- to C-terminus: Chorismate synthase (361 aa).

2 residues coordinate NADP(+): R48 and R54. FMN is bound by residues 125-127 (RSS), 238-239 (NA), G278, 293-297 (KPTSS), and R319.

It belongs to the chorismate synthase family. As to quaternary structure, homotetramer. It depends on FMNH2 as a cofactor.

It catalyses the reaction 5-O-(1-carboxyvinyl)-3-phosphoshikimate = chorismate + phosphate. The protein operates within metabolic intermediate biosynthesis; chorismate biosynthesis; chorismate from D-erythrose 4-phosphate and phosphoenolpyruvate: step 7/7. In terms of biological role, catalyzes the anti-1,4-elimination of the C-3 phosphate and the C-6 proR hydrogen from 5-enolpyruvylshikimate-3-phosphate (EPSP) to yield chorismate, which is the branch point compound that serves as the starting substrate for the three terminal pathways of aromatic amino acid biosynthesis. This reaction introduces a second double bond into the aromatic ring system. This chain is Chorismate synthase, found in Salmonella paratyphi A (strain ATCC 9150 / SARB42).